The primary structure comprises 1902 residues: Plexin-B3 (1902 aa).

Residues 1-36 form the signal peptide; that stretch reads MLTDFLQAPVMAPWSPFSLHLLLLFLPLLPLTRVHR. The 425-residue stretch at 37–461 folds into the Sema domain; the sequence is FSVPNTSFNH…TAQQVDRILV (425 aa). At 37 to 1245 the chain is on the extracellular side; it reads FSVPNTSFNH…MMSTFPVEAQ (1209 aa). The N-linked (GlcNAc...) asparagine glycan is linked to N41. Intrachain disulfides connect C88-C97 and C122-C130. N-linked (GlcNAc...) asparagine glycosylation is present at N221. 3 disulfide bridges follow: C257-C360, C273-C305, and C323-C347. The tract at residues 353–372 is disordered; it reads DSPESYPCGDEHTPSPIAGR. N-linked (GlcNAc...) asparagine glycans are attached at residues N416 and N469. The PSI 1 domain occupies 463-515; it reads ACPQFPNCTTCLQARDPLCGWCILQGRCTRRGECGRAAQPNHWLWSYEDNHCP. 5 disulfides stabilise this stretch: C464–C481, C470–C514, C473–C490, C484–C496, and C551–C569. 2 PSI domains span residues 609–671 and 776–822; these read DCSA…EACP and DCAM…QLCP. N-linked (GlcNAc...) asparagine glycans are attached at residues N791, N889, N910, N946, N1090, and N1207. IPT/TIG domains lie at 823 to 914, 915 to 1001, 1003 to 1134, and 1154 to 1221; these read IPSI…FTYQ, DPVL…FRYT, NPQL…FLYQ, and KPGH…QMGN. The chain crosses the membrane as a helical span at residues 1246 to 1266; that stretch reads LGLGMGAAVLIAAVLLLTLMY. Residues 1267 to 1902 are Cytoplasmic-facing; sequence RHKSKKALRD…ALVEYKVTDL (636 aa).

It belongs to the plexin family. Binds MET and MST1R. Interacts with RIT2/RIN. May form homodimers (via Sema domain). Interacts (via cytoplasmic domain) with FSCN1, ARHGDIA and RAC1. As to expression, expressed in brain (at protein level). In cerebellum, strongest expression detected in Purkinje and granular cells. Detected at very low levels in several fetal tissues, including dorsal root ganglia (DRG), heart, lung, optic bulb, brain and liver.

It localises to the cell membrane. Functionally, receptor for SEMA5A that plays a role in axon guidance, invasive growth and cell migration. Stimulates neurite outgrowth and mediates Ca(2+)/Mg(2+)-dependent cell aggregation. In glioma cells, SEMA5A stimulation of PLXNB3 results in the disassembly of F-actin stress fibers, disruption of focal adhesions and cellular collapse as well as inhibition of cell migration and invasion through ARHGDIA-mediated inactivation of RAC1. Seem to be non-essential for normal development and function of the central nervous system. This Mus musculus (Mouse) protein is Plexin-B3 (Plxnb3).